Here is a 602-residue protein sequence, read N- to C-terminus: Fumarate reductase flavoprotein subunit (602 aa).

Residues 12-16 (GAGGA), 36-38 (ISK), 44-52 (SHTVAAEGG), 156-158 (HFV), 192-193 (AT), and Asp212 each bind FAD. The residue at position 45 (His45) is a Tele-8alpha-FAD histidine. Residues His233 and Arg249 contribute to the active site. Residues 356–357 (HY), Glu380, and 391–397 (RLGSNSL) contribute to the FAD site. Residues 581 to 602 (YGGEADAADKAEAANKKEKANG) form a disordered region. Basic and acidic residues predominate over residues 587 to 602 (AADKAEAANKKEKANG).

It belongs to the FAD-dependent oxidoreductase 2 family. FRD/SDH subfamily. Part of an enzyme complex containing four subunits: a flavoprotein (FrdA), an iron-sulfur protein (FrdB), and two hydrophobic anchor proteins (FrdC and FrdD). Can be cross-linked to SdhE. Purified from membrane fractions associated with protoporphyrinogen IX dehydrogenase (hemG). The cofactor is FAD.

The protein resides in the cell inner membrane. The catalysed reaction is a quinone + succinate = fumarate + a quinol. The enzyme catalyses a menaquinone + succinate = a menaquinol + fumarate. Inhibited by oxaloacetate, a substrate analog. In terms of biological role, two distinct, membrane-bound, FAD-containing enzymes are responsible for the catalysis of fumarate and succinate interconversion; fumarate reductase is used during anaerobic growth, and succinate dehydrogenase is used during aerobic growth. The QFR enzyme complex binds 2 quinones in or near the membrane; 1 near the [3Fe-4S] cluster (QP is proximal to the [3Fe-4S] cluster, on the cytoplasmic side of the membrane) while QD (the distal cluster) is on the other side of the membrane. It is not clear if both of the quinol-binding sites are functionally relevant. The chain is Fumarate reductase flavoprotein subunit (frdA) from Escherichia coli (strain K12).